Reading from the N-terminus, the 521-residue chain is Feruloyl esterase B (521 aa).

The N-terminal stretch at M1–A17 is a signal peptide. Cystine bridges form between C26-C72 and C61-C111. 6 N-linked (GlcNAc...) asparagine glycosylation sites follow: N37, N51, N77, N95, N144, and N177. Cystine bridges form between C184/C438, C253/C270, and C279/C288. Catalysis depends on S185, which acts as the Acyl-ester intermediate. Ca(2+)-binding residues include D254, D257, A259, D261, and I263. N-linked (GlcNAc...) asparagine glycans are attached at residues N284, N347, N352, and N378. Catalysis depends on charge relay system residues D397 and H437. N-linked (GlcNAc...) asparagine glycans are attached at residues N488 and N511. C498 and C520 are oxidised to a cystine.

Belongs to the tannase family. As to quaternary structure, homodimer. Glycosylated.

It is found in the secreted. It catalyses the reaction feruloyl-polysaccharide + H2O = ferulate + polysaccharide.. Its activity is regulated as follows. Inhibited by the specific serine esterase inhibitor AEBSF. In terms of biological role, involved in degradation of plant cell walls. Hydrolyzes of the feruloyl-arabinose ester bond in arabinoxylans as well as the feruloyl-galactose and feruloyl-arabinose ester bonds in pectin. This Aspergillus niger protein is Feruloyl esterase B (faeB).